Here is a 125-residue protein sequence, read N- to C-terminus: Ribosome-binding factor A (125 aa).

Belongs to the RbfA family. Monomer. Binds 30S ribosomal subunits, but not 50S ribosomal subunits or 70S ribosomes.

The protein localises to the cytoplasm. Functionally, one of several proteins that assist in the late maturation steps of the functional core of the 30S ribosomal subunit. Associates with free 30S ribosomal subunits (but not with 30S subunits that are part of 70S ribosomes or polysomes). Required for efficient processing of 16S rRNA. May interact with the 5'-terminal helix region of 16S rRNA. The protein is Ribosome-binding factor A of Paracidovorax citrulli (strain AAC00-1) (Acidovorax citrulli).